The primary structure comprises 251 residues: Imidazole glycerol phosphate synthase subunit HisF (251 aa).

Residues D11 and D130 contribute to the active site.

The protein belongs to the HisA/HisF family. Heterodimer of HisH and HisF.

The protein localises to the cytoplasm. It carries out the reaction 5-[(5-phospho-1-deoxy-D-ribulos-1-ylimino)methylamino]-1-(5-phospho-beta-D-ribosyl)imidazole-4-carboxamide + L-glutamine = D-erythro-1-(imidazol-4-yl)glycerol 3-phosphate + 5-amino-1-(5-phospho-beta-D-ribosyl)imidazole-4-carboxamide + L-glutamate + H(+). It functions in the pathway amino-acid biosynthesis; L-histidine biosynthesis; L-histidine from 5-phospho-alpha-D-ribose 1-diphosphate: step 5/9. IGPS catalyzes the conversion of PRFAR and glutamine to IGP, AICAR and glutamate. The HisF subunit catalyzes the cyclization activity that produces IGP and AICAR from PRFAR using the ammonia provided by the HisH subunit. This chain is Imidazole glycerol phosphate synthase subunit HisF, found in Chlorobium luteolum (strain DSM 273 / BCRC 81028 / 2530) (Pelodictyon luteolum).